Consider the following 807-residue polypeptide: 1-phosphatidylinositol 4,5-bisphosphate phosphodiesterase delta-4 (807 aa).

The PH domain maps to 16–124 (LLMQEGTMMR…WMRGLQLLVD (109 aa)). The substrate binding stretch occupies residues 26–53 (KVRTKSWKKLRYFRLQNDGMTVWHGSQP). EF-hand domains follow at residues 134 to 169 (QMDQMLNEWFQQADRNQDGRMSFREAQRLLLLMNVE), 170 to 205 (MDEEYAFSLFQEADVTQSDDLGSEEFVQFYKALTKR), and 203 to 237 (TKRTEIEEIFEDFSSDKQKLTLLEFVDFLRKEQKE). The Ca(2+) site is built by aspartate 147, asparagine 149, aspartate 151, arginine 153, glutamate 158, aspartate 183, serine 187, aspartate 189, and glutamate 194. The GBA signature appears at 213-243 (EDFSSDKQKLTLLEFVDFLRKEQKEKDHAPD). One can recognise a PI-PLC X-box domain in the interval 290–435 (QDMTQPLSHY…LRGKILVKGK (146 aa)). Histidine 305 is a catalytic residue. Residues asparagine 306, glutamate 335, and aspartate 337 each contribute to the Ca(2+) site. Histidine 350 is an active-site residue. Glutamate 384 is a Ca(2+) binding site. Residues lysine 433 and lysine 435 each coordinate substrate. The segment at 442–490 (VDKEEEEEEEEEELEKDEGPDLDPASPELDTQPQPETQGQAAGNKKERK) is disordered. Acidic residues predominate over residues 443-462 (DKEEEEEEEEEELEKDEGPD). A compositionally biased stretch (polar residues) spans 470–482 (LDTQPQPETQGQA). The PI-PLC Y-box domain occupies 538–654 (LSALVVYLRT…GYVLKPEFLR (117 aa)). Positions 567 and 594 each coordinate substrate. The region spanning 654–781 (RDTQSSFNPE…QGYRHVSLLS (128 aa)) is the C2 domain. Ca(2+) is bound by residues aspartate 697, asparagine 721, aspartate 750, and tyrosine 751. The PDZ-binding signature appears at 776–779 (HVSL).

As to quaternary structure, interacts with GRIP1. Interacts (via GBA motif) with guanine nucleotide-binding protein G(i) alpha subunit GNAI3 (inactive GDP-bound form)l low-affinity interaction. Ca(2+) serves as cofactor.

The protein localises to the membrane. The protein resides in the nucleus. It localises to the cytoplasm. Its subcellular location is the endoplasmic reticulum. It carries out the reaction a 1,2-diacyl-sn-glycero-3-phospho-(1D-myo-inositol-4,5-bisphosphate) + H2O = 1D-myo-inositol 1,4,5-trisphosphate + a 1,2-diacyl-sn-glycerol + H(+). It catalyses the reaction a 1,2-diacyl-sn-glycero-3-phospho-(1D-myo-inositol) + H2O = 1D-myo-inositol 1-phosphate + a 1,2-diacyl-sn-glycerol + H(+). Hydrolyzes the phosphatidylinositol 4,5-bisphosphate (PIP2) to generate 2 second messenger molecules diacylglycerol (DAG) and inositol 1,4,5-trisphosphate (IP3). DAG mediates the activation of protein kinase C (PKC), while IP3 releases Ca(2+) from intracellular stores. Required for acrosome reaction in sperm during fertilization, probably by acting as an important enzyme for intracellular Ca(2+) mobilization in the zona pellucida-induced acrosome reaction. May play a role in cell growth. Modulates the liver regeneration in cooperation with nuclear PKC. Overexpression up-regulates the Erk signaling pathway and proliferation. This Mus musculus (Mouse) protein is 1-phosphatidylinositol 4,5-bisphosphate phosphodiesterase delta-4.